Here is a 211-residue protein sequence, read N- to C-terminus: Arginine exporter protein ArgO (211 aa).

6 helical membrane passes run Met1 to Pro21, Leu37 to Gly57, Leu68 to Leu88, Ile111 to Val131, Trp147 to Ala167, and Ala179 to Ala199.

The protein belongs to the LysE/ArgO transporter (TC 2.A.75) family.

It localises to the cell inner membrane. It carries out the reaction L-arginine(in) = L-arginine(out). Its function is as follows. Involved in the export of arginine. Important to control the intracellular level of arginine and the correct balance between arginine and lysine. This chain is Arginine exporter protein ArgO, found in Salmonella paratyphi A (strain ATCC 9150 / SARB42).